The chain runs to 239 residues: Ribosomal RNA small subunit methyltransferase G (239 aa).

S-adenosyl-L-methionine-binding positions include Gly-76, Phe-81, 99-101 (DSS), 128-129 (IE), and Arg-147.

This sequence belongs to the methyltransferase superfamily. RNA methyltransferase RsmG family.

The protein localises to the cytoplasm. Its function is as follows. Specifically methylates the N7 position of a guanine in 16S rRNA. In Prochlorococcus marinus subsp. pastoris (strain CCMP1986 / NIES-2087 / MED4), this protein is Ribosomal RNA small subunit methyltransferase G.